Consider the following 74-residue polypeptide: Translational regulator CsrA (74 aa).

This sequence belongs to the CsrA/RsmA family. In terms of assembly, homodimer; the beta-strands of each monomer intercalate to form a hydrophobic core, while the alpha-helices form wings that extend away from the core.

The protein localises to the cytoplasm. A translational regulator that binds mRNA to regulate translation initiation and/or mRNA stability. Usually binds in the 5'-UTR at or near the Shine-Dalgarno sequence preventing ribosome-binding, thus repressing translation. Its main target seems to be the major flagellin gene, while its function is anatagonized by FliW. This Oceanobacillus iheyensis (strain DSM 14371 / CIP 107618 / JCM 11309 / KCTC 3954 / HTE831) protein is Translational regulator CsrA.